A 152-amino-acid polypeptide reads, in one-letter code: Deoxyuridine 5'-triphosphate nucleotidohydrolase (152 aa).

Substrate-binding positions include Arg-71–Gly-73, Asn-84, Leu-88–Asp-90, and Met-98.

The protein belongs to the dUTPase family. Requires Mg(2+) as cofactor.

It catalyses the reaction dUTP + H2O = dUMP + diphosphate + H(+). It participates in pyrimidine metabolism; dUMP biosynthesis; dUMP from dCTP (dUTP route): step 2/2. In terms of biological role, this enzyme is involved in nucleotide metabolism: it produces dUMP, the immediate precursor of thymidine nucleotides and it decreases the intracellular concentration of dUTP so that uracil cannot be incorporated into DNA. The polypeptide is Deoxyuridine 5'-triphosphate nucleotidohydrolase (Pectobacterium carotovorum subsp. carotovorum (strain PC1)).